We begin with the raw amino-acid sequence, 597 residues long: Siderophore iron transporter 2 (597 aa).

Phosphoserine is present on Ser46. Transmembrane regions (helical) follow at residues 65-85 (IIVA…EQQT), 97-117 (FSAH…LAVV), 131-151 (SESL…LAFS), 159-179 (VAYI…QLII), 190-210 (ILSA…PVLA), 225-245 (YGIW…SLFL), 281-301 (LDGL…LPFS), 312-332 (TILT…LCFY), 357-377 (VLIF…TSFL), 390-410 (LTLN…GFLM), 419-439 (LLMI…LFGI), 448-468 (LVLV…SAQI), 485-505 (LYLT…GGVW), and 558-578 (KDLF…LVII).

This sequence belongs to the major facilitator superfamily.

The protein localises to the membrane. Involved in the transport of siderophore iron and so has a role in iron homeostasis. In Schizosaccharomyces pombe (strain 972 / ATCC 24843) (Fission yeast), this protein is Siderophore iron transporter 2 (str2).